The following is a 674-amino-acid chain: MTNKSSLKNNRKGVASNTLSGAEQANIGSSAMPDTNSTGPFSSVSSLDTPVVRKSTSPTGSQTKSIMNASGTSGAVVSNTPEPGLKRIPTVTFSDPKLGSLRSDVEQTPPNQVARQSSEKKATSVHIAAEGANQGRNLKDINTKVPKDGEASASSFSTPTSILSNADMGNNISSLLAKKLSFTGGTDSILNSDNSSDSPRKEHPHFYVEDPLHTPSVRSRSNSTSPRPSVVVNTFNPINIEREGSISKTGEPTLLESVLEEAMSPNAVSNPLKRENIMTNMDPRLPQDDGKLHVLFGATGSLSVFKLKHMIRKLEEIYGRDKICIQVILTNSATKFFAMKYMRKNKKQHNSIDTSFNSTNSNAGNITGNKKKVASLEKFSIQKTSSNSAASQTNNKQEEEKQMASTTGFPSTLGGSRTYSNSSNVVSQHPQIELPAHIQFWTDQDEWDVWRQRTDPVLHIELRRWADILVVAPLTANTLAKIALGLCDNLLTSVIRAWNPTFPIFLAPSMGSGTFNSIMTKKHFRIIQEEMPWVTVFKPSEKVMGINGDIGLSGMMDANEIVGKIVVKLGGYPDVSAGKEEEEDEDNDEEDDNKKNDTGGKDEDNDDDDDDDDDDDDDDDDDDDDDDDDDDDDDDDDDDDDDDDDDDDDDEDDEDEDEDDEGKKKEDKGGLQRS.

Disordered regions lie at residues 1-164, 190-230, 348-368, 384-426, and 575-674; these read MTNK…SILS, LNSD…RPSV, QHNSIDTSFNSTNSNAGNITG, TSSN…SNVV, and VSAG…LQRS. Over residues 15–81 the composition is skewed to polar residues; that stretch reads ASNTLSGAEQ…TSGAVVSNTP (67 aa). A Phosphothreonine modification is found at Thr90. The span at 106-116 shows a compositional bias: polar residues; the sequence is EQTPPNQVARQ. Residues 137–150 are compositionally biased toward basic and acidic residues; sequence NLKDINTKVPKDGE. Residues 152–164 are compositionally biased toward polar residues; sequence SASSFSTPTSILS. Positions 198-212 are enriched in basic and acidic residues; sequence SPRKEHPHFYVEDPL. The span at 214–230 shows a compositional bias: low complexity; that stretch reads TPSVRSRSNSTSPRPSV. A compositionally biased stretch (polar residues) spans 351–368; it reads SIDTSFNSTNSNAGNITG. Low complexity predominate over residues 384–395; that stretch reads TSSNSAASQTNN. The span at 403–426 shows a compositional bias: polar residues; sequence MASTTGFPSTLGGSRTYSNSSNVV. The segment covering 580-591 has biased composition (acidic residues); that stretch reads EEEEDEDNDEED. Residues 592–602 are compositionally biased toward basic and acidic residues; that stretch reads DNKKNDTGGKD. Residues 603-660 show a composition bias toward acidic residues; sequence EDNDDDDDDDDDDDDDDDDDDDDDDDDDDDDDDDDDDDDDDDDDDDDDEDDEDEDEDD. Over residues 661 to 674 the composition is skewed to basic and acidic residues; it reads EGKKKEDKGGLQRS.

This sequence belongs to the HFCD (homooligomeric flavin containing Cys decarboxylase) superfamily. As to quaternary structure, interacts with the C-terminal domain of PPZ1. Component of the phosphopantothenoylcysteine decarboxylase (PPCDC) complex, a heterotrimer composed of CAB3, SIS2 and VHS3.

Component of the phosphopantothenoylcysteine decarboxylase (PPCDC) involved in the coenzyme A synthesis. Acts as an inhibitory subunit of protein phosphatase PPZ1, which is involved in many cellular processes such as G1-S transition or salt tolerance. This Saccharomyces cerevisiae (strain ATCC 204508 / S288c) (Baker's yeast) protein is Phosphopantothenoylcysteine decarboxylase subunit VHS3 (VHS3).